The following is a 261-amino-acid chain: Proteasome subunit alpha type-4 (261 aa).

Phosphoserine occurs at positions 13 and 75. At Lys127 the chain carries N6-acetyllysine. Ser173 bears the Phosphoserine mark. N6-acetyllysine is present on Lys176. The disordered stretch occupies residues 240 to 261 (HEEEEAKAEREKKEKEQKEKDK).

This sequence belongs to the peptidase T1A family. In terms of assembly, the 26S proteasome consists of a 20S proteasome core and two 19S regulatory subunits. The 20S proteasome core is a barrel-shaped complex made of 28 subunits that are arranged in four stacked rings. The two outer rings are each formed by seven alpha subunits, and the two inner rings are formed by seven beta subunits. The proteolytic activity is exerted by three beta-subunits PSMB5, PSMB6 and PSMB7.

It localises to the cytoplasm. The protein localises to the nucleus. Component of the 20S core proteasome complex involved in the proteolytic degradation of most intracellular proteins. This complex plays numerous essential roles within the cell by associating with different regulatory particles. Associated with two 19S regulatory particles, forms the 26S proteasome and thus participates in the ATP-dependent degradation of ubiquitinated proteins. The 26S proteasome plays a key role in the maintenance of protein homeostasis by removing misfolded or damaged proteins that could impair cellular functions, and by removing proteins whose functions are no longer required. Associated with the PA200 or PA28, the 20S proteasome mediates ubiquitin-independent protein degradation. This type of proteolysis is required in several pathways including spermatogenesis (20S-PA200 complex) or generation of a subset of MHC class I-presented antigenic peptides (20S-PA28 complex). The sequence is that of Proteasome subunit alpha type-4 (PSMA4) from Bos taurus (Bovine).